A 79-amino-acid chain; its full sequence is Conotoxin ArMKLT2-031 (79 aa).

Residues 1–22 (MKLTCVLIIAVLFLTACQLTTG) form the signal peptide. Positions 23 to 46 (ETYSRGEQKDHALRSTDKNSKLTR) are excised as a propeptide. Gln47 carries the pyrrolidone carboxylic acid modification. 3 cysteine pairs are disulfide-bonded: Cys48–Cys62, Cys55–Cys66, and Cys61–Cys73.

This sequence belongs to the conotoxin O1 superfamily. As to expression, expressed by the venom duct.

The protein localises to the secreted. The chain is Conotoxin ArMKLT2-031 from Conus arenatus (Sand-dusted cone).